Here is a 344-residue protein sequence, read N- to C-terminus: L-rhamnose-proton symporter (344 aa).

The next 10 membrane-spanning stretches (helical) occupy residues 4 to 24, 38 to 58, 68 to 88, 101 to 121, 137 to 157, 175 to 195, 207 to 227, 259 to 279, 290 to 310, and 321 to 341; these read AIIL…CFYA, WSIG…YLLL, FSIA…IGNI, MGIG…TPIL, TLLG…AGLL, LILA…MDAA, INSL…GAII, ILFS…YAWG, MSWM…GLLL, and VAVL…VGLG.

The protein belongs to the L-rhamnose transporter (TC 2.A.7.6) family.

It localises to the cell inner membrane. The enzyme catalyses L-rhamnopyranose(in) + H(+)(in) = L-rhamnopyranose(out) + H(+)(out). Functionally, uptake of L-rhamnose across the cytoplasmic membrane with the concomitant transport of protons into the cell (symport system). This is L-rhamnose-proton symporter from Yersinia pseudotuberculosis serotype O:1b (strain IP 31758).